A 536-amino-acid chain; its full sequence is Heparanase-like protein 3 (536 aa).

Positions 1 to 24 (MAYRQILAIVLFLCVFQFLDCTVS) are cleaved as a signal peptide. Asn-30, Asn-122, Asn-176, and Asn-191 each carry an N-linked (GlcNAc...) asparagine glycan. Catalysis depends on Glu-202, which acts as the Proton donor. Asn-265 and Asn-308 each carry an N-linked (GlcNAc...) asparagine glycan. The active-site Nucleophile is Glu-319. Residues Asn-370, Asn-427, Asn-438, and Asn-510 are each glycosylated (N-linked (GlcNAc...) asparagine).

The protein belongs to the glycosyl hydrolase 79 family.

The protein localises to the lysosome membrane. It localises to the secreted. Its function is as follows. Endoglycosidase which is a cell surface and extracellular matrix-degrading enzyme. Cleaves heparan sulfate proteoglycans (HSPGs) into heparan sulfate side chains and core proteoglycans. This chain is Heparanase-like protein 3, found in Arabidopsis thaliana (Mouse-ear cress).